Consider the following 428-residue polypeptide: Somatostatin receptor type 3 (428 aa).

The Extracellular segment spans residues 1–45 (MAAVTYPSSVPTTLDPGNASSAWPLDTSLGNASAGTSLAGLAVSG). 2 N-linked (GlcNAc...) asparagine glycosylation sites follow: Asn18 and Asn31. The chain crosses the membrane as a helical span at residues 46–71 (ILISLVYLVVCVVGLLGNSLVIYVVL). Residues 72–81 (RHTSSPSVTS) are Cytoplasmic-facing. A helical transmembrane segment spans residues 82 to 103 (VYILNLALADELFMLGLPFLAA). Topologically, residues 104 to 118 (QNALSYWPFGSLMCR) are extracellular. A disulfide bridge connects residues Cys117 and Cys192. The helical transmembrane segment at 119–140 (LVMAVDGINQFTSIFCLTVMSV) threads the bilayer. Residues 141-162 (DRYLAVVHPTRSARWRTAPVAR) lie on the Cytoplasmic side of the membrane. A helical membrane pass occupies residues 163–182 (MVSAAVWVASAVVVLPVVVF). Residues 183 to 206 (SGVPRGMSTCHMQWPEPAAAWRTA) lie on the Extracellular side of the membrane. The chain crosses the membrane as a helical span at residues 207 to 232 (FIIYTAALGFFGPLLVICLCYLLIVV). The Cytoplasmic segment spans residues 233 to 266 (KVRSTTRRVRAPSCQWVQAPACQRRRRSERRVTR). The helical transmembrane segment at 267-288 (MVVAVVALFVLCWMPFYLLNIV) threads the bilayer. The Extracellular portion of the chain corresponds to 289 to 302 (NVVCPLPEEPAFFG). A helical transmembrane segment spans residues 303 to 325 (LYFLVVALPYANSCANPILYGFL). The Cytoplasmic portion of the chain corresponds to 326–428 (SYRFKQGFRR…GDKASTLSHL (103 aa)). Phosphoserine occurs at positions 341, 346, and 351. The disordered stretch occupies residues 343–428 (RVRSQEPGSG…GDKASTLSHL (86 aa)). Position 357 is a phosphothreonine (Thr357). The segment covering 357 to 370 (TEEEEDEEEEERRE) has biased composition (acidic residues). A compositionally biased stretch (polar residues) spans 385–412 (RLSQIAQPGPSGQQQRPCTGTAKEQQLL).

It belongs to the G-protein coupled receptor 1 family. As to quaternary structure, homodimer and heterodimer with SSTR2. Heterodimerization with SSTR2 inactivates SSTR3 receptor function. In terms of processing, phosphorylated. Phosphorylation increases upon somatostatin binding. In terms of tissue distribution, densely expressed in cerebellum and at moderate levels in the amygdala, cortex, striatum, spleen, liver and pituitary.

The protein localises to the cell membrane. Its function is as follows. Receptor for somatostatin-14 and -28. This receptor is coupled via pertussis toxin sensitive G proteins to inhibition of adenylyl cyclase. This chain is Somatostatin receptor type 3 (Sstr3), found in Rattus norvegicus (Rat).